Here is a 275-residue protein sequence, read N- to C-terminus: Large ribosomal subunit protein uL2 (275 aa).

The disordered stretch occupies residues 210-275; the sequence is GRNRHRGIRP…DKLIISRKKK (66 aa). A compositionally biased stretch (basic residues) spans 257 to 275; that stretch reads FKTRKKKASDKLIISRKKK.

Belongs to the universal ribosomal protein uL2 family. As to quaternary structure, part of the 50S ribosomal subunit. Forms a bridge to the 30S subunit in the 70S ribosome.

Its function is as follows. One of the primary rRNA binding proteins. Required for association of the 30S and 50S subunits to form the 70S ribosome, for tRNA binding and peptide bond formation. It has been suggested to have peptidyltransferase activity; this is somewhat controversial. Makes several contacts with the 16S rRNA in the 70S ribosome. The protein is Large ribosomal subunit protein uL2 of Helicobacter hepaticus (strain ATCC 51449 / 3B1).